The sequence spans 180 residues: MASTISAYKEKMKELSVLSLICSCFYTQPHPNTIYQYGDMEVKQLDKRASGQSFEVILKSPSDLSPESPMLSSPPKKKDTSLEELQKRLEAAEERRKTQEAQVLKQLAERREHEREVLHKALEENNNFSRQAEEKLNYKMELSKEIREAHLAALRERLREKELHAAEVRRNKEQREEMSG.

S-palmitoyl cysteine attachment occurs at residues cysteine 22 and cysteine 24. The SLD domain maps to 38–180 (GDMEVKQLDK…NKEQREEMSG (143 aa)). A phosphoserine mark is found at serine 50, serine 60, serine 65, serine 68, serine 72, serine 73, and serine 81. Residues 59-82 (KSPSDLSPESPMLSSPPKKKDTSL) form a disordered region. Residues 60-74 (SPSDLSPESPMLSSP) are compositionally biased toward low complexity. Residues 76 to 179 (KKKDTSLEEL…RNKEQREEMS (104 aa)) adopt a coiled-coil conformation.

It belongs to the stathmin family. In terms of assembly, interacts with STAT3. Interacts with CLU (secreted form); this interaction may act as an important modulator during neuronal differentiation. N-terminal palmitoylation promotes specific anchoring to the cytosolic leaflet of Golgi membranes and subsequent vesicular trafficking along dendrites and axons. Neuronal Stathmins are substrates for palmitoyltransferases ZDHHC3, ZDHHC7 and ZDHHC15.

The protein resides in the golgi apparatus. Its subcellular location is the cell projection. It localises to the growth cone. The protein localises to the axon. It is found in the cytoplasm. The protein resides in the cytosol. Functionally, exhibits microtubule-destabilizing activity, which is antagonized by STAT3. The polypeptide is Stathmin-3 (STMN3) (Macaca fascicularis (Crab-eating macaque)).